A 254-amino-acid chain; its full sequence is Ribosomal RNA small subunit methyltransferase J (254 aa).

Residues 107–108 (RD), 123–124 (ER), and D174 contribute to the S-adenosyl-L-methionine site.

This sequence belongs to the methyltransferase superfamily. RsmJ family.

It is found in the cytoplasm. It catalyses the reaction guanosine(1516) in 16S rRNA + S-adenosyl-L-methionine = N(2)-methylguanosine(1516) in 16S rRNA + S-adenosyl-L-homocysteine + H(+). In terms of biological role, specifically methylates the guanosine in position 1516 of 16S rRNA. The chain is Ribosomal RNA small subunit methyltransferase J from Coxiella burnetii (strain CbuK_Q154) (Coxiella burnetii (strain Q154)).